Consider the following 256-residue polypeptide: Pimeloyl-[acyl-carrier protein] methyl ester esterase (256 aa).

The AB hydrolase-1 domain maps to H15–P242. Substrate contacts are provided by residues W22, S82–L83, and F143–Q147. The active-site Nucleophile is S82. Residues D207 and H235 contribute to the active site. H235 contacts substrate.

This sequence belongs to the AB hydrolase superfamily. Carboxylesterase BioH family. Monomer.

The protein localises to the cytoplasm. The catalysed reaction is 6-carboxyhexanoyl-[ACP] methyl ester + H2O = 6-carboxyhexanoyl-[ACP] + methanol + H(+). Its pathway is cofactor biosynthesis; biotin biosynthesis. Functionally, the physiological role of BioH is to remove the methyl group introduced by BioC when the pimeloyl moiety is complete. It allows to synthesize pimeloyl-ACP via the fatty acid synthetic pathway through the hydrolysis of the ester bonds of pimeloyl-ACP esters. The chain is Pimeloyl-[acyl-carrier protein] methyl ester esterase from Shigella boydii serotype 4 (strain Sb227).